The chain runs to 215 residues: MTQSLADMRRDYTRDGLAEAQAPGEPFALFHQWFADAVKTEQPPVEANAMTLATVDGDGRPHCRVLLLKGLDDRGFTFFTNYDSAKGQQLQANPYAAMTFFWPALERQVRIEGRVEKVTPQESDDYYQVRPLGSRLGAWASPQSRVIASREALEGLVKATEARFSDTQPHCPEHWGGYRLLPERIEFWQGRASRLHDRLNYRWVDGQWARERLAP.

Residues 9–12 and K69 each bind substrate; that span reads RRDY. Residues 64–69, 79–80, K86, and Q108 contribute to the FMN site; these read RVLLLK and FT. Residues Y126, R130, and S134 each coordinate substrate. FMN contacts are provided by residues 143–144 and W188; that span reads QS. Position 194-196 (194-196) interacts with substrate; it reads RLH. R198 provides a ligand contact to FMN.

Belongs to the pyridoxamine 5'-phosphate oxidase family. In terms of assembly, homodimer. It depends on FMN as a cofactor.

It carries out the reaction pyridoxamine 5'-phosphate + O2 + H2O = pyridoxal 5'-phosphate + H2O2 + NH4(+). The catalysed reaction is pyridoxine 5'-phosphate + O2 = pyridoxal 5'-phosphate + H2O2. Its pathway is cofactor metabolism; pyridoxal 5'-phosphate salvage; pyridoxal 5'-phosphate from pyridoxamine 5'-phosphate: step 1/1. It functions in the pathway cofactor metabolism; pyridoxal 5'-phosphate salvage; pyridoxal 5'-phosphate from pyridoxine 5'-phosphate: step 1/1. Its function is as follows. Catalyzes the oxidation of either pyridoxine 5'-phosphate (PNP) or pyridoxamine 5'-phosphate (PMP) into pyridoxal 5'-phosphate (PLP). In Pseudomonas putida (strain W619), this protein is Pyridoxine/pyridoxamine 5'-phosphate oxidase.